The primary structure comprises 186 residues: Large ribosomal subunit protein uL5 (186 aa).

Belongs to the universal ribosomal protein uL5 family. As to quaternary structure, part of the 50S ribosomal subunit; contacts the 5S rRNA and probably tRNA. Forms a bridge to the 30S subunit in the 70S ribosome.

Its function is as follows. This is one of the proteins that bind and probably mediate the attachment of the 5S RNA into the large ribosomal subunit, where it forms part of the central protuberance. In the 70S ribosome it contacts protein S13 of the 30S subunit (bridge B1b), connecting the 2 subunits; this bridge is implicated in subunit movement. May contact the P site tRNA; the 5S rRNA and some of its associated proteins might help stabilize positioning of ribosome-bound tRNAs. The polypeptide is Large ribosomal subunit protein uL5 (Methanopyrus kandleri (strain AV19 / DSM 6324 / JCM 9639 / NBRC 100938)).